Consider the following 403-residue polypeptide: Serine/threonine transporter SstT (403 aa).

Transmembrane regions (helical) follow at residues 14–34 (VTQI…APAI), 44–64 (VFVS…VMAS), 79–99 (ILWL…FASM), 138–158 (ALLN…GVAL), 175–195 (GVTL…FGLV), 214–234 (LAVL…LIVF), 295–315 (MAGA…TLGI), 327–347 (VVAA…LLLI), and 353–373 (LFGI…IIGV).

This sequence belongs to the dicarboxylate/amino acid:cation symporter (DAACS) (TC 2.A.23) family.

The protein localises to the cell inner membrane. It catalyses the reaction L-serine(in) + Na(+)(in) = L-serine(out) + Na(+)(out). The catalysed reaction is L-threonine(in) + Na(+)(in) = L-threonine(out) + Na(+)(out). Involved in the import of serine and threonine into the cell, with the concomitant import of sodium (symport system). The sequence is that of Serine/threonine transporter SstT from Pseudomonas putida (strain ATCC 47054 / DSM 6125 / CFBP 8728 / NCIMB 11950 / KT2440).